A 476-amino-acid chain; its full sequence is Efflux pump atB (476 aa).

The tract at residues 1-38 is disordered; sequence MAPQLAGSSHSSSASDQAHRQSSDPALESGSDTHVGSI. The next 10 membrane-spanning stretches (helical) occupy residues 69–89, 96–116, 127–147, 186–206, 264–284, 294–314, 347–367, 372–392, 403–425, and 440–460; these read LIVA…LAPL, KPVY…CAVA, FFNG…VGDL, WSFY…SLLV, LLLC…FGAF, FNLW…IIGI, LPPA…FAWT, VHWI…IMIF, YPLY…AAAF, and WAGF…YIFY.

It belongs to the major facilitator superfamily.

The protein localises to the cell membrane. Efflux pump that might be required for efficient secretion of terreic acid. The protein is Efflux pump atB of Aspergillus terreus (strain NIH 2624 / FGSC A1156).